Reading from the N-terminus, the 686-residue chain is NADH-ubiquinone oxidoreductase chain 5 (686 aa).

Transmembrane regions (helical) follow at residues 3–23 (LIILFLPFVGAFISGFLGRFV), 40–60 (ALLSLYYWLSINELIIGLFSF), 101–121 (ITLPFLFTVLFISFLIHLFSV), 139–159 (LFTFFMAILVTGANYFVLFVG), 160–180 (WEGIGVVSYLLINFWFTRIQA), 198–218 (LSIAYFVMLPAFGSADFSTVF), 222–242 (AYINQTTITIIGFLLLVGAMA), 261–281 (TPVSALIHAATLVTAGSYLLI), 293–313 (VLLVITIIGASTAFFAATCGL), 321–341 (IIAFSTISQLGYMVMAIGLSQ), 350–370 (LFHAYFKALLFLGAGSVIHAF), 382–402 (LINFLPFTYAVMLVGTLSLLA), 432–452 (ILGSVTAGLTAFYSFRLISLV), 472–492 (ITVIIPLAVLAIFSIFFGYVT), 526–546 (LIFKLLPTIFSLAGTLFALYL), 635–655 (ALYITLGLLSLLFIVFAPMLV), and 665–685 (LIILFIFTLIVNSAYLNKKLS).

It belongs to the complex I subunit 5 family.

Its subcellular location is the mitochondrion inner membrane. It catalyses the reaction a ubiquinone + NADH + 5 H(+)(in) = a ubiquinol + NAD(+) + 4 H(+)(out). Its function is as follows. Core subunit of the mitochondrial membrane respiratory chain NADH dehydrogenase (Complex I) that is believed to belong to the minimal assembly required for catalysis. Complex I functions in the transfer of electrons from NADH to the respiratory chain. The immediate electron acceptor for the enzyme is believed to be ubiquinone. The chain is NADH-ubiquinone oxidoreductase chain 5 (ND5) from Schizophyllum commune (Split gill fungus).